A 503-amino-acid polypeptide reads, in one-letter code: Protein-cysteine N-palmitoyltransferase HHAT-like protein (503 aa).

The next 8 helical transmembrane spans lie at 12–31 (LGLY…RGLL), 65–87 (WVMW…VLFA), 100–122 (WMYA…LLLL), 127–149 (MVLY…LASL), 250–272 (AGLS…ILTI), 287–309 (LAGL…FGVV), 426–445 (VRAL…NLVS), and 460–482 (ILTG…VQLV).

The protein belongs to the membrane-bound acyltransferase family. HHAT subfamily. Interacts with SHH.

The protein resides in the endoplasmic reticulum membrane. Its function is as follows. Negatively regulates N-terminal palmitoylation of SHH by HHAT/SKN. The sequence is that of Protein-cysteine N-palmitoyltransferase HHAT-like protein (Hhatl) from Mus musculus (Mouse).